A 184-amino-acid chain; its full sequence is NADH-quinone oxidoreductase subunit B (184 aa).

Positions 37, 38, 103, and 132 each coordinate [4Fe-4S] cluster.

The protein belongs to the complex I 20 kDa subunit family. NDH-1 is composed of 14 different subunits. Subunits NuoB, C, D, E, F, and G constitute the peripheral sector of the complex. [4Fe-4S] cluster is required as a cofactor.

The protein localises to the cell membrane. It catalyses the reaction a quinone + NADH + 5 H(+)(in) = a quinol + NAD(+) + 4 H(+)(out). Its function is as follows. NDH-1 shuttles electrons from NADH, via FMN and iron-sulfur (Fe-S) centers, to quinones in the respiratory chain. The immediate electron acceptor for the enzyme in this species is believed to be a menaquinone. Couples the redox reaction to proton translocation (for every two electrons transferred, four hydrogen ions are translocated across the cytoplasmic membrane), and thus conserves the redox energy in a proton gradient. The sequence is that of NADH-quinone oxidoreductase subunit B from Mycobacterium bovis (strain BCG / Pasteur 1173P2).